The following is a 107-amino-acid chain: Phosphoribosyl-ATP pyrophosphatase (107 aa).

The protein belongs to the PRA-PH family.

It is found in the cytoplasm. It carries out the reaction 1-(5-phospho-beta-D-ribosyl)-ATP + H2O = 1-(5-phospho-beta-D-ribosyl)-5'-AMP + diphosphate + H(+). The protein operates within amino-acid biosynthesis; L-histidine biosynthesis; L-histidine from 5-phospho-alpha-D-ribose 1-diphosphate: step 2/9. The polypeptide is Phosphoribosyl-ATP pyrophosphatase (Nitrobacter hamburgensis (strain DSM 10229 / NCIMB 13809 / X14)).